We begin with the raw amino-acid sequence, 149 residues long: Acyl carrier protein 1, chloroplastic (149 aa).

The N-terminal 59 residues, 1 to 59 (MAHCLAAVSSFSPSAVRRRLSSQVANVVSSRSSVSFHSRQMSFVSISSRPSSLRFKICC), are a transit peptide targeting the chloroplast. The Carrier domain maps to 69-144 (KETVDKVCMI…DAANLIEKLV (76 aa)). At serine 104 the chain carries O-(pantetheine 4'-phosphoryl)serine.

This sequence belongs to the acyl carrier protein (ACP) family. Post-translationally, 4'-phosphopantetheine is transferred from CoA to a specific serine of apo-ACP by acpS. This modification is essential for activity because fatty acids are bound in thioester linkage to the sulfhydryl of the prosthetic group.

It localises to the plastid. The protein localises to the chloroplast. It functions in the pathway lipid metabolism; fatty acid biosynthesis. Functionally, carrier of the growing fatty acid chain in fatty acid biosynthesis. In Hordeum vulgare (Barley), this protein is Acyl carrier protein 1, chloroplastic (ACL1.1).